Consider the following 212-residue polypeptide: Imidazole glycerol phosphate synthase subunit HisH (212 aa).

Positions 1–211 (MIGVIDYGMG…KQFTQEQKVK (211 aa)) constitute a Glutamine amidotransferase type-1 domain. The active-site Nucleophile is C79. Active-site residues include H186 and E188.

Heterodimer of HisH and HisF.

The protein localises to the cytoplasm. The catalysed reaction is 5-[(5-phospho-1-deoxy-D-ribulos-1-ylimino)methylamino]-1-(5-phospho-beta-D-ribosyl)imidazole-4-carboxamide + L-glutamine = D-erythro-1-(imidazol-4-yl)glycerol 3-phosphate + 5-amino-1-(5-phospho-beta-D-ribosyl)imidazole-4-carboxamide + L-glutamate + H(+). It carries out the reaction L-glutamine + H2O = L-glutamate + NH4(+). It participates in amino-acid biosynthesis; L-histidine biosynthesis; L-histidine from 5-phospho-alpha-D-ribose 1-diphosphate: step 5/9. In terms of biological role, IGPS catalyzes the conversion of PRFAR and glutamine to IGP, AICAR and glutamate. The HisH subunit catalyzes the hydrolysis of glutamine to glutamate and ammonia as part of the synthesis of IGP and AICAR. The resulting ammonia molecule is channeled to the active site of HisF. The protein is Imidazole glycerol phosphate synthase subunit HisH of Bacillus licheniformis (strain ATCC 14580 / DSM 13 / JCM 2505 / CCUG 7422 / NBRC 12200 / NCIMB 9375 / NCTC 10341 / NRRL NRS-1264 / Gibson 46).